Reading from the N-terminus, the 1400-residue chain is DNA-directed RNA polymerase subunit beta' (1400 aa).

4 residues coordinate Zn(2+): C71, C73, C86, and C89. Residues D462, D464, and D466 each coordinate Mg(2+). Residues C820, C893, C900, and C903 each coordinate Zn(2+).

Belongs to the RNA polymerase beta' chain family. As to quaternary structure, the RNAP catalytic core consists of 2 alpha, 1 beta, 1 beta' and 1 omega subunit. When a sigma factor is associated with the core the holoenzyme is formed, which can initiate transcription. It depends on Mg(2+) as a cofactor. Zn(2+) serves as cofactor.

The catalysed reaction is RNA(n) + a ribonucleoside 5'-triphosphate = RNA(n+1) + diphosphate. Functionally, DNA-dependent RNA polymerase catalyzes the transcription of DNA into RNA using the four ribonucleoside triphosphates as substrates. The chain is DNA-directed RNA polymerase subunit beta' from Methylobacterium nodulans (strain LMG 21967 / CNCM I-2342 / ORS 2060).